Here is a 370-residue protein sequence, read N- to C-terminus: MYLAYIFFLFATVSAIPTGRVEIVFPSVETSRSGMKTVKFRALGEDVELKLEPAGDILAQDFALYNGNQEKQQSVNVESLRRRLYRDSANGAALLIDDDEQPPSIEGIVFSKLRISPHEWKEVTEEGKRAHQVEELTSDRDSYLSDDILIPDFQREMVSFTRIDRNDKCIVIEVLLVTDRKFTERCETNEALTEYVTLLSSVTEALFRQLDSGWQLRLLGIMTFTNETEPPLFEESKHPNGAYKPVFVNKINDYFRENPTSLSKNADIIGILLTRSMRDRMDDWYSFEGLAFGNSVCSGNKACAINAYEKAEQAAYNLAHEMAHSLGIFHDGEFYRCVPEEVSEVISCPNSNYIMGYNSGDNYGKIFRMF.

Residues 1–15 (MYLAYIFFLFATVSA) form the signal peptide. A Peptidase M12B domain is found at 170 to 370 (IVIEVLLVTD…DNYGKIFRMF (201 aa)). N-linked (GalNAc...) asparagine glycosylation occurs at N226. Position 320 (H320) interacts with Zn(2+). E321 is a catalytic residue. Zn(2+) contacts are provided by H324 and H330.

Belongs to the venom metalloproteinase (M12B) family. Expressed by the venom gland.

The protein resides in the secreted. Its function is as follows. Metalloprotease that may disrupt the cell matrix and the process of clotting blood or hemolymph. In Tityus obscurus (Amazonian scorpion), this protein is Metalloproteinase.